The following is a 397-amino-acid chain: Dual oxidase maturation factor 1 (397 aa).

Helical transmembrane passes span 26–46 and 57–77; these read FVIFSVFLIPLIAYILILPGV and YVLMLAVGGALIASLIYPCWA. Asparagine 109 carries N-linked (GlcNAc...) asparagine glycosylation. The next 3 helical transmembrane spans lie at 191 to 211, 218 to 238, and 261 to 281; these read AAIWFAFACWCLSVVLMLFLP, ILATGISCLIACLVYLLLSPC, and CFYLIFAIGILCVLCGLGLGI. The disordered stretch occupies residues 324 to 376; that stretch reads YGTNTTNSSRDKNDISSDKTAGSSGFQSRTSTCQSSASSASLRSQSSIETVHD. 2 N-linked (GlcNAc...) asparagine glycosylation sites follow: asparagine 327 and asparagine 330. A compositionally biased stretch (polar residues) spans 341–350; sequence DKTAGSSGFQ. The span at 351–370 shows a compositional bias: low complexity; it reads SRTSTCQSSASSASLRSQSS.

This sequence belongs to the DUOXA family. Interacts with bli-3 and tsp-15. Interacts with csnk-1. Expressed in the hypodermis, specifically in seam cells, the terminal bulb of the pharynx, the distal region of the gonadal arm, vulva, spermatheca and uterus.

The protein resides in the membrane. Functionally, plays a role in cuticle biogenesis. In complex with tsp-15 and the dual oxidase bli-3, promotes the generation of reactive oxygen species (ROS) and tyrosine cross-linking of collagen, thus stabilizing cuticular extracellular matrix. The protein is Dual oxidase maturation factor 1 of Caenorhabditis elegans.